Here is a 388-residue protein sequence, read N- to C-terminus: Acyl-CoA dehydrogenase fadE12 (388 aa).

The protein belongs to the acyl-CoA dehydrogenase family. FAD is required as a cofactor.

The catalysed reaction is a 2,3-saturated acyl-CoA + A = a 2,3-dehydroacyl-CoA + AH2. This Mycobacterium tuberculosis (strain CDC 1551 / Oshkosh) protein is Acyl-CoA dehydrogenase fadE12 (fadE12).